Reading from the N-terminus, the 50-residue chain is Cuticle protein CP498 (50 aa).

Tandem repeats lie at residues 6–23 (ATVG…LIQL) and 30–47 (ILEG…FVTY).

In terms of tissue distribution, calcified shell.

This is Cuticle protein CP498 from Cancer pagurus (Rock crab).